Reading from the N-terminus, the 466-residue chain is Putative multidrug resistance protein MdtD (466 aa).

The next 14 helical transmembrane spans lie at 11–31 (LWIVAFGFFMQTLDTTIVNTA), 48–68 (SVIVSYVLTVAVMLPASGWLA), 71–91 (IGVKNIFFAAILLFTLGSLLC), 105–125 (VIQGIGGAMMVPVGRLTVMKI), 137–157 (FVTLPGQIGPLMGPALGGFLV), 164–184 (WIFLINLPVGIIGALATWFLM), 194–214 (FDISGFLWLAVGMATLTLALD), 218–238 (SLGIPPIAIFALITVGLIALL), 262–282 (FSIGLTGGLLARIGSGMLPFM), 286–306 (FLQLGMGFSPFHAGLMMVPMV), 328–347 (VLIVSTLLLALVTALFALVA), 351–370 (WIWMIPIVLFFLGMVNAIRF), 403–423 (LGVSIAGILLGMFSQPHMAAG), and 429–449 (MVFIYTYLSMIVIIALPALIF).

It belongs to the major facilitator superfamily. TCR/Tet family.

It is found in the cell inner membrane. The polypeptide is Putative multidrug resistance protein MdtD (Pectobacterium carotovorum subsp. carotovorum (strain PC1)).